The following is a 28-amino-acid chain: U-actitoxin-Ate1 (28 aa).

A signal peptide spans 1–15 (MSLILIFFAFTVLKS). Cys20 and Cys26 are disulfide-bonded.

Monomer in solution. May be N-glycosylated at Asn-22. Activity with this modification has not be tested. Highly expressed in the tentacles. Weakly expressed in acrorhagi and mesenteric filaments.

The protein resides in the secreted. It localises to the nematocyst. In terms of biological role, probable toxin expected to be employed in prey capture and/or defense against predators (based on its abundance in tentacles). Has only a weak affinity for lipid membranes. Shows moderate cytotoxic activity against breast cancer cell lines (MCF-7 and MDA-MB-231). This is U-actitoxin-Ate1 from Actinia tenebrosa (Australian red waratah sea anemone).